The sequence spans 445 residues: Transmembrane protein 184C (445 aa).

7 helical membrane-spanning segments follow: residues 15 to 35 (LVVL…VWEL), 46 to 66 (AWFI…WGIL), 84 to 104 (ILWM…YPNI), 177 to 197 (YTVV…VGVY), 210 to 230 (YLVI…VLFY), 252 to 272 (VVFV…VGVI), and 285 to 305 (AVAT…AAIA). Disordered stretches follow at residues 369 to 393 (EHTS…SSPM) and 421 to 445 (TSAT…LDRS). The span at 370-390 (HTSLLSSSTQDPISDASSMPS) shows a compositional bias: polar residues.

It belongs to the TMEM184 family.

It localises to the membrane. In terms of biological role, may play a role in cell growth. The chain is Transmembrane protein 184C (TMEM184C) from Gallus gallus (Chicken).